Here is a 1173-residue protein sequence, read N- to C-terminus: DNA-directed RNA polymerase subunit beta (1173 aa).

The protein belongs to the RNA polymerase beta chain family. As to quaternary structure, the RNAP catalytic core consists of 2 alpha, 1 beta, 1 beta' and 1 omega subunit. When a sigma factor is associated with the core the holoenzyme is formed, which can initiate transcription.

The enzyme catalyses RNA(n) + a ribonucleoside 5'-triphosphate = RNA(n+1) + diphosphate. In terms of biological role, DNA-dependent RNA polymerase catalyzes the transcription of DNA into RNA using the four ribonucleoside triphosphates as substrates. This Kosmotoga olearia (strain ATCC BAA-1733 / DSM 21960 / TBF 19.5.1) protein is DNA-directed RNA polymerase subunit beta.